The primary structure comprises 180 residues: Adenine phosphoribosyltransferase (180 aa).

This sequence belongs to the purine/pyrimidine phosphoribosyltransferase family. Homodimer.

It localises to the cytoplasm. The catalysed reaction is AMP + diphosphate = 5-phospho-alpha-D-ribose 1-diphosphate + adenine. Its pathway is purine metabolism; AMP biosynthesis via salvage pathway; AMP from adenine: step 1/1. Catalyzes a salvage reaction resulting in the formation of AMP, that is energically less costly than de novo synthesis. The polypeptide is Adenine phosphoribosyltransferase (Mycobacterium avium (strain 104)).